The chain runs to 213 residues: ATP phosphoribosyltransferase (213 aa).

This sequence belongs to the ATP phosphoribosyltransferase family. Short subfamily. As to quaternary structure, heteromultimer composed of HisG and HisZ subunits.

The protein resides in the cytoplasm. The enzyme catalyses 1-(5-phospho-beta-D-ribosyl)-ATP + diphosphate = 5-phospho-alpha-D-ribose 1-diphosphate + ATP. It participates in amino-acid biosynthesis; L-histidine biosynthesis; L-histidine from 5-phospho-alpha-D-ribose 1-diphosphate: step 1/9. In terms of biological role, catalyzes the condensation of ATP and 5-phosphoribose 1-diphosphate to form N'-(5'-phosphoribosyl)-ATP (PR-ATP). Has a crucial role in the pathway because the rate of histidine biosynthesis seems to be controlled primarily by regulation of HisG enzymatic activity. The sequence is that of ATP phosphoribosyltransferase from Teredinibacter turnerae (strain ATCC 39867 / T7901).